An 850-amino-acid chain; its full sequence is Probable beta-glucosidase J (850 aa).

N-linked (GlcNAc...) asparagine glycans are attached at residues asparagine 43 and asparagine 52. Aspartate 254 is a catalytic residue. In terms of domain architecture, PA14 spans 423-583; the sequence is TGERGYTFRV…DAETAIKQAV (161 aa). The N-linked (GlcNAc...) asparagine glycan is linked to asparagine 508.

It belongs to the glycosyl hydrolase 3 family.

It is found in the secreted. The catalysed reaction is Hydrolysis of terminal, non-reducing beta-D-glucosyl residues with release of beta-D-glucose.. Its pathway is glycan metabolism; cellulose degradation. Its function is as follows. Beta-glucosidases are one of a number of cellulolytic enzymes involved in the degradation of cellulosic biomass. Catalyzes the last step releasing glucose from the inhibitory cellobiose. The polypeptide is Probable beta-glucosidase J (bglJ) (Emericella nidulans (strain FGSC A4 / ATCC 38163 / CBS 112.46 / NRRL 194 / M139) (Aspergillus nidulans)).